We begin with the raw amino-acid sequence, 299 residues long: 4-hydroxy-tetrahydrodipicolinate synthase (299 aa).

Pyruvate is bound at residue threonine 47. The Proton donor/acceptor role is filled by tyrosine 136. Lysine 164 acts as the Schiff-base intermediate with substrate in catalysis. Alanine 205 lines the pyruvate pocket.

The protein belongs to the DapA family. As to quaternary structure, homotetramer; dimer of dimers.

It is found in the cytoplasm. It catalyses the reaction L-aspartate 4-semialdehyde + pyruvate = (2S,4S)-4-hydroxy-2,3,4,5-tetrahydrodipicolinate + H2O + H(+). The protein operates within amino-acid biosynthesis; L-lysine biosynthesis via DAP pathway; (S)-tetrahydrodipicolinate from L-aspartate: step 3/4. Its function is as follows. Catalyzes the condensation of (S)-aspartate-beta-semialdehyde [(S)-ASA] and pyruvate to 4-hydroxy-tetrahydrodipicolinate (HTPA). This Pediococcus pentosaceus (strain ATCC 25745 / CCUG 21536 / LMG 10740 / 183-1w) protein is 4-hydroxy-tetrahydrodipicolinate synthase.